We begin with the raw amino-acid sequence, 174 residues long: Small ribosomal subunit protein uS5 (174 aa).

Positions 16 to 79 constitute an S5 DRBM domain; the sequence is LSELLVSVRR…NAAKKSMIRV (64 aa).

The protein belongs to the universal ribosomal protein uS5 family. Part of the 30S ribosomal subunit. Contacts proteins S4 and S8.

Functionally, with S4 and S12 plays an important role in translational accuracy. Its function is as follows. Located at the back of the 30S subunit body where it stabilizes the conformation of the head with respect to the body. This Anaplasma marginale (strain Florida) protein is Small ribosomal subunit protein uS5.